The primary structure comprises 892 residues: DNA mismatch repair protein MutS (892 aa).

607 to 614 (GPNMSGKS) contacts ATP.

Belongs to the DNA mismatch repair MutS family.

Functionally, this protein is involved in the repair of mismatches in DNA. It is possible that it carries out the mismatch recognition step. This protein has a weak ATPase activity. This chain is DNA mismatch repair protein MutS, found in Bacillus cereus (strain G9842).